A 1254-amino-acid polypeptide reads, in one-letter code: Histone-lysine N-methyltransferase eggless (1254 aa).

Disordered stretches follow at residues 24-209 (ALVE…EIPR) and 228-248 (PVPR…SKTT). Composition is skewed to basic and acidic residues over residues 40-57 (TPEK…KDLT) and 65-81 (KSQE…KDPE). Residues 112-125 (SVELLESPLKSPSS) show a composition bias toward low complexity. A compositionally biased stretch (basic and acidic residues) spans 136 to 162 (LEEKEKPGPAKELEPKESEPDSKESSK). Positions 172–181 (ELISSPTSDD) are enriched in polar residues. Composition is skewed to basic and acidic residues over residues 182-197 (SLAK…EHGQ) and 234-243 (AMQESKETQK). Positions 391–416 (TILQAKIERLAKKFEEVDLQLAQVQG) form a coiled coil. Tudor domains follow at residues 535–607 (RLPI…SEKV) and 634–691 (QCTK…KETQ). The disordered stretch occupies residues 734 to 760 (ARKSTSKSGSPASTAAPPTGSSSSSAV). Positions 739–759 (SKSGSPASTAAPPTGSSSSSA) are enriched in low complexity. An MBD domain is found at 811–877 (LDSYSPLSKP…DNFDFTPDLR (67 aa)). The Pre-SET domain maps to 939-1011 (VCCDCEDDCS…NCLNRVVQHS (73 aa)). Zn(2+) is bound by residues Cys941, Cys943, Cys947, Cys953, Cys955, Cys993, Cys997, Cys999, and Cys1003. In terms of domain architecture, SET spans 1014–1229 (MKLQVFKTSN…SGTELTWNYN (216 aa)). S-adenosyl-L-methionine is bound by residues 1024 to 1026 (RGW), Asp1062, and Tyr1064. Over residues 1081-1090 (YESDVERADL) the composition is skewed to basic and acidic residues. Positions 1081–1139 (YESDVERADLDHEDDNYGPDAEDDDDFRPNNYYQKKKEKLRSSRSNSSSTQNTELDSQE) are disordered. Acidic residues predominate over residues 1091–1106 (DHEDDNYGPDAEDDDD). Residues 1123–1134 (SRSNSSSTQNTE) are compositionally biased toward low complexity. Residues Arg1183 and 1186-1187 (NH) contribute to the S-adenosyl-L-methionine site. Cys1189, Cys1242, Cys1244, and Cys1249 together coordinate Zn(2+). Positions 1238–1254 (KVLYCQCGAQNCRVRLL) constitute a Post-SET domain.

It belongs to the class V-like SAM-binding methyltransferase superfamily. Histone-lysine methyltransferase family. Suvar3-9 subfamily.

The protein resides in the nucleus. The protein localises to the chromosome. It carries out the reaction L-lysyl(9)-[histone H3] + 3 S-adenosyl-L-methionine = N(6),N(6),N(6)-trimethyl-L-lysyl(9)-[histone H3] + 3 S-adenosyl-L-homocysteine + 3 H(+). Histone methyltransferase that specifically trimethylates 'Lys-9' of histone H3 in ovary. H3 'Lys-9' trimethylation represents a specific tag for epigenetic transcriptional repression by recruiting Su(var)205/HP1 to methylated histones. Plays a central role during oogenesis. This chain is Histone-lysine N-methyltransferase eggless (egg), found in Drosophila pseudoobscura pseudoobscura (Fruit fly).